We begin with the raw amino-acid sequence, 304 residues long: Transcription factor BEE 2 (304 aa).

Residues 74–132 (FHMEPVKNNGHSRAITLQNKRKPEGKTEKREKKKIKAEDETEPSMKGKSNMSNTETSSE) form a disordered region. Over residues 82–91 (NGHSRAITLQ) the composition is skewed to polar residues. A compositionally biased stretch (basic and acidic residues) spans 94 to 103 (RKPEGKTEKR). The segment covering 120–132 (GKSNMSNTETSSE) has biased composition (polar residues). A bHLH domain is found at 147-197 (EATDRHSLAERARREKISKKMKCLQDIVPGCNKVTGKAGMLDEIINYVQSL).

In terms of assembly, homodimer. As to expression, expressed in stems and flowers.

Its subcellular location is the nucleus. Functionally, positive regulator of brassinosteroid signaling. The polypeptide is Transcription factor BEE 2 (BEE2) (Arabidopsis thaliana (Mouse-ear cress)).